A 1293-amino-acid chain; its full sequence is Phosphoribosylformylglycinamidine synthase (1293 aa).

Residues 305–316 (GAATGSGGEIRD) and alanine 676 each bind ATP. The disordered stretch occupies residues 305 to 327 (GAATGSGGEIRDEGATGRGSKPK). Mg(2+) is bound by residues aspartate 677, glutamate 716, asparagine 720, and aspartate 884. Residue serine 886 coordinates ATP. Residues 1040 to 1293 (MAILREQGVN…MFRNARVNLG (254 aa)) form the Glutamine amidotransferase type-1 domain. The active-site Nucleophile is the cysteine 1133. Catalysis depends on residues histidine 1258 and glutamate 1260.

It in the N-terminal section; belongs to the FGAMS family. Monomer.

The protein resides in the cytoplasm. The enzyme catalyses N(2)-formyl-N(1)-(5-phospho-beta-D-ribosyl)glycinamide + L-glutamine + ATP + H2O = 2-formamido-N(1)-(5-O-phospho-beta-D-ribosyl)acetamidine + L-glutamate + ADP + phosphate + H(+). The protein operates within purine metabolism; IMP biosynthesis via de novo pathway; 5-amino-1-(5-phospho-D-ribosyl)imidazole from N(2)-formyl-N(1)-(5-phospho-D-ribosyl)glycinamide: step 1/2. Its function is as follows. Phosphoribosylformylglycinamidine synthase involved in the purines biosynthetic pathway. Catalyzes the ATP-dependent conversion of formylglycinamide ribonucleotide (FGAR) and glutamine to yield formylglycinamidine ribonucleotide (FGAM) and glutamate. This is Phosphoribosylformylglycinamidine synthase from Shewanella oneidensis (strain ATCC 700550 / JCM 31522 / CIP 106686 / LMG 19005 / NCIMB 14063 / MR-1).